Reading from the N-terminus, the 437-residue chain is Proline--tRNA ligase (437 aa).

The protein belongs to the class-II aminoacyl-tRNA synthetase family. ProS type 2 subfamily. In terms of assembly, homodimer.

It is found in the cytoplasm. The catalysed reaction is tRNA(Pro) + L-proline + ATP = L-prolyl-tRNA(Pro) + AMP + diphosphate. Functionally, catalyzes the attachment of proline to tRNA(Pro) in a two-step reaction: proline is first activated by ATP to form Pro-AMP and then transferred to the acceptor end of tRNA(Pro). This chain is Proline--tRNA ligase, found in Acidiphilium cryptum (strain JF-5).